The following is a 331-amino-acid chain: Probable zinc-binding oxidoreductase, mitochondrial (331 aa).

Residues 1–29 (MASVTSVPKTGRSVNQDVPATTLTLQTRP) show a composition bias toward polar residues. Residues 1–34 (MASVTSVPKTGRSVNQDVPATTLTLQTRPTPAPN) form a disordered region.

The protein belongs to the zinc-containing alcohol dehydrogenase family. Quinone oxidoreductase subfamily.

Its subcellular location is the mitochondrion. The chain is Probable zinc-binding oxidoreductase, mitochondrial from Arthroderma benhamiae (strain ATCC MYA-4681 / CBS 112371) (Trichophyton mentagrophytes).